The sequence spans 215 residues: MPGEATETVPVTEQEMQQPQAETGSGTESDSDESVPDLEEGDSAQTQTQQAQLAAAAEIDEEPVSKAKQSRSEKKARKAMSKLGLRQVAGVTRVTIRKSKNILFVITKPDVYKSPASDTYIVFGEAKIEDLSQQAQLAAAEKFKVQGEAVSNIQENTQTPTVQEESEEEEVDETGVEVKDIELVMSQANVSRAKAVRALKNNNNDIVNAIMELTM.

Residues 1 to 82 (MPGEATETVP…EKKARKAMSK (82 aa)) are disordered. Residues 9-28 (VPVTEQEMQQPQAETGSGTE) are compositionally biased toward polar residues. A compositionally biased stretch (acidic residues) spans 29–42 (SDSDESVPDLEEGD). The span at 44–57 (AQTQTQQAQLAAAA) shows a compositional bias: low complexity. Positions 70–135 (SRSEKKARKA…AKIEDLSQQA (66 aa)) constitute an NAC-A/B domain. S166 is modified (phosphoserine). The UBA domain occupies 176–213 (VEVKDIELVMSQANVSRAKAVRALKNNNNDIVNAIMEL).

This sequence belongs to the NAC-alpha family.

In terms of biological role, may promote appropriate targeting of ribosome-nascent polypeptide complexes. This Danio rerio (Zebrafish) protein is Nascent polypeptide-associated complex subunit alpha (naca).